Consider the following 182-residue polypeptide: Transcription termination/antitermination protein NusG (182 aa).

The KOW domain maps to 130–161 (VGEVVRVNEGPFADFNGTVEEVDYEKSRLKVS).

This sequence belongs to the NusG family.

Its function is as follows. Participates in transcription elongation, termination and antitermination. The sequence is that of Transcription termination/antitermination protein NusG from Vibrio vulnificus (strain CMCP6).